The chain runs to 589 residues: ATP-dependent ubiquitin transferase-like protein Cap2 (589 aa).

Residue Cys13 forms a Glycyl cysteine dithioester (Cys-Gly) (interchain with G-Cter in DncV) linkage. Lys77 participates in a covalent cross-link: Glycyl lysine isopeptide (Lys-Gly) (interchain with G-Cter in DncV). Cys91 serves as the catalytic For E2-like domain. Glycyl lysine isopeptide (Lys-Gly) (interchain with G-Cter in DncV) cross-links involve residues Lys305, Lys387, and Lys484. A Glycyl cysteine dithioester (Cys-Gly) (interchain with G-Cter in DncV) cross-link involves residue Cys493. Residues Cys493, Cys496, and Cys513 each act as for E1-like domain in the active site. Residue Cys513 forms a Glycyl cysteine dithioester (Cys-Gly) (interchain with G-Cter in DncV) linkage. A Glycyl lysine isopeptide (Lys-Gly) (interchain with G-Cter in DncV) cross-link involves residue Lys523.

It in the C-terminal section; belongs to the HesA/MoeB/ThiF family. A Cap2 dimer is bound on either side by a DncV monomer. Conjugated to DncV via 5 different Lys residues and 3 Cys residues.

In terms of biological role, CD-NTase priming component of a CBASS antiviral system. CBASS (cyclic oligonucleotide-based antiphage signaling system) provides immunity against bacteriophages. The CD-NTase protein (DncV) synthesizes cyclic nucleotides in response to infection; these serve as specific second messenger signals. The signals activate a diverse range of effectors, leading to bacterial cell death and thus abortive phage infection. A type II-A(GA) CBASS system. Conjugates DncV to itself in vitro and to other cellular proteins in vivo; conjugation requires ATP. This primes DncV, upon phage infection CdnA activates and makes cyclic nucleotides. Functionally, protects E.coli against phage infection. When capV and dncV are introduced in E.coli MG1655 there is 1000-fold protection against phage P1; protection against other phage (T2, T4, T5, T6 and lambda-vir) requires the 2 subsequent genes. In another paper the capV-dncV-cap2-cap3 operon gives 10(4)-10(5)-fold protection against phages lambda, T2, T4 and T6, about 1000-fold protection against P1 and 10-fold protection against T5. The chain is ATP-dependent ubiquitin transferase-like protein Cap2 from Escherichia coli (strain TW11681).